Reading from the N-terminus, the 310-residue chain is p-hydroxybenzoic acid efflux pump subunit AaeA (310 aa).

Residues Ala-12–Tyr-32 traverse the membrane as a helical segment.

It belongs to the membrane fusion protein (MFP) (TC 8.A.1) family.

It is found in the cell inner membrane. Forms an efflux pump with AaeB. This Salmonella arizonae (strain ATCC BAA-731 / CDC346-86 / RSK2980) protein is p-hydroxybenzoic acid efflux pump subunit AaeA.